We begin with the raw amino-acid sequence, 436 residues long: 3-ketoacyl-CoA thiolase (436 aa).

Cys-99 serves as the catalytic Acyl-thioester intermediate. Residues His-392 and Cys-422 each act as proton acceptor in the active site.

The protein belongs to the thiolase-like superfamily. Thiolase family. Heterotetramer of two alpha chains (FadJ) and two beta chains (FadI).

It localises to the cytoplasm. It carries out the reaction an acyl-CoA + acetyl-CoA = a 3-oxoacyl-CoA + CoA. Its pathway is lipid metabolism; fatty acid beta-oxidation. In terms of biological role, catalyzes the final step of fatty acid oxidation in which acetyl-CoA is released and the CoA ester of a fatty acid two carbons shorter is formed. The chain is 3-ketoacyl-CoA thiolase from Shewanella denitrificans (strain OS217 / ATCC BAA-1090 / DSM 15013).